The primary structure comprises 92 residues: Neuropeptide F (92 aa).

A signal peptide spans 1–27; the sequence is MSQSRPLALLVVAALVAAAVLVAAAEA. Residues 28-51 constitute a propeptide that is removed on maturation; that stretch reads QQADGNKLEGLADALKYLQELDRY. A Phenylalanine amide modification is found at Phe60. A propeptide spanning residues 64 to 92 is cleaved from the precursor; that stretch reads AELRPDVVDDVIPEEMSADKFWRRFARRR.

It belongs to the NPY family. In terms of tissue distribution, widely expressed in the nervous system. Expressed in corpora cardiaca, hypocerebral ganglion, frontal ganglion, protocerebrum, antennal lobe, tritocerebrum and thoracic ganglia. Not detected in corpora allata, pars intercerebralis, circumesophageal connectives, subesophageal ganglion, abdominal ganglion and abdominal perisympathetic organs.

Its subcellular location is the secreted. Its function is as follows. Accelerates ovarian maturation in females. This is Neuropeptide F from Locusta migratoria (Migratory locust).